Consider the following 191-residue polypeptide: MDIQPITTYTGKVVPLFNDNIDTDQIIPKVHLKRITKSGFGPFAFDEWRYLPDGTNNPDFNPNKPEFSGATILITGDNFGCGSSREHAAWALKDYGFNIIIAGSFSDIFFMNCTKNGMLPITLGENERKYLASQKEITIDLPNQTVSANDKSFNFQIDETWKHKLVNGLDDIAITLEYEDLIEQYENKNKG.

It belongs to the LeuD family. LeuD type 1 subfamily. As to quaternary structure, heterodimer of LeuC and LeuD.

The enzyme catalyses (2R,3S)-3-isopropylmalate = (2S)-2-isopropylmalate. It functions in the pathway amino-acid biosynthesis; L-leucine biosynthesis; L-leucine from 3-methyl-2-oxobutanoate: step 2/4. Its function is as follows. Catalyzes the isomerization between 2-isopropylmalate and 3-isopropylmalate, via the formation of 2-isopropylmaleate. The chain is 3-isopropylmalate dehydratase small subunit from Staphylococcus haemolyticus (strain JCSC1435).